The sequence spans 235 residues: Ubiquinone/menaquinone biosynthesis C-methyltransferase UbiE (235 aa).

S-adenosyl-L-methionine-binding residues include T60, D81, and S126.

This sequence belongs to the class I-like SAM-binding methyltransferase superfamily. MenG/UbiE family.

The enzyme catalyses a 2-demethylmenaquinol + S-adenosyl-L-methionine = a menaquinol + S-adenosyl-L-homocysteine + H(+). The catalysed reaction is a 2-methoxy-6-(all-trans-polyprenyl)benzene-1,4-diol + S-adenosyl-L-methionine = a 5-methoxy-2-methyl-3-(all-trans-polyprenyl)benzene-1,4-diol + S-adenosyl-L-homocysteine + H(+). It functions in the pathway quinol/quinone metabolism; menaquinone biosynthesis; menaquinol from 1,4-dihydroxy-2-naphthoate: step 2/2. The protein operates within cofactor biosynthesis; ubiquinone biosynthesis. In terms of biological role, methyltransferase required for the conversion of demethylmenaquinol (DMKH2) to menaquinol (MKH2) and the conversion of 2-polyprenyl-6-methoxy-1,4-benzoquinol (DDMQH2) to 2-polyprenyl-3-methyl-6-methoxy-1,4-benzoquinol (DMQH2). In Geobacter sp. (strain M21), this protein is Ubiquinone/menaquinone biosynthesis C-methyltransferase UbiE.